Reading from the N-terminus, the 338-residue chain is tRNA N6-adenosine threonylcarbamoyltransferase (338 aa).

2 residues coordinate Fe cation: H111 and H115. Substrate contacts are provided by residues 134–138 (LVSGG), D167, G180, and N272. Residue D300 coordinates Fe cation.

The protein belongs to the KAE1 / TsaD family. The cofactor is Fe(2+).

It is found in the cytoplasm. The catalysed reaction is L-threonylcarbamoyladenylate + adenosine(37) in tRNA = N(6)-L-threonylcarbamoyladenosine(37) in tRNA + AMP + H(+). Required for the formation of a threonylcarbamoyl group on adenosine at position 37 (t(6)A37) in tRNAs that read codons beginning with adenine. Is involved in the transfer of the threonylcarbamoyl moiety of threonylcarbamoyl-AMP (TC-AMP) to the N6 group of A37, together with TsaE and TsaB. TsaD likely plays a direct catalytic role in this reaction. This is tRNA N6-adenosine threonylcarbamoyltransferase from Shewanella denitrificans (strain OS217 / ATCC BAA-1090 / DSM 15013).